We begin with the raw amino-acid sequence, 463 residues long: L-seryl-tRNA(Sec) selenium transferase (463 aa).

At K295 the chain carries N6-(pyridoxal phosphate)lysine.

This sequence belongs to the SelA family. In terms of assembly, homodecamer; pentamer of dimers. Binds only one seryl-tRNA(Sec) per dimer. Pyridoxal 5'-phosphate is required as a cofactor.

The protein resides in the cytoplasm. It carries out the reaction L-seryl-tRNA(Sec) + selenophosphate + H(+) = L-selenocysteinyl-tRNA(Sec) + phosphate. It participates in aminoacyl-tRNA biosynthesis; selenocysteinyl-tRNA(Sec) biosynthesis; selenocysteinyl-tRNA(Sec) from L-seryl-tRNA(Sec) (bacterial route): step 1/1. In terms of biological role, converts seryl-tRNA(Sec) to selenocysteinyl-tRNA(Sec) required for selenoprotein biosynthesis. This chain is L-seryl-tRNA(Sec) selenium transferase, found in Shigella dysenteriae serotype 1 (strain Sd197).